The following is a 155-amino-acid chain: UBA-like domain-containing protein 1 (155 aa).

The disordered stretch occupies residues 81–155; that stretch reads KASESFNSSS…KASAAMEAER (75 aa). Over residues 83-96 the composition is skewed to low complexity; the sequence is SESFNSSSSPSMAT. Polar residues predominate over residues 112–127; it reads ANQQSLWTQGPSAQQT. Over residues 139-155 the composition is skewed to low complexity; the sequence is QQAASEQKASAAMEAER.

It belongs to the UBALD family.

This Danio rerio (Zebrafish) protein is UBA-like domain-containing protein 1 (ubald1).